A 132-amino-acid chain; its full sequence is Agouti-signaling protein (132 aa).

The signal sequence occupies residues 1–22 (MDVTRLVLATLLVFLCFFAAYS). Asparagine 39 carries N-linked (GlcNAc...) asparagine glycosylation. Residues 60–93 (KKISRKEAEKRRSSKKEASKQKVARPRTPLSVPC) form a disordered region. The span at 64–79 (RKEAEKRRSSKKEASK) shows a compositional bias: basic and acidic residues. Disulfide bonds link cysteine 93–cysteine 108, cysteine 100–cysteine 114, cysteine 107–cysteine 125, cysteine 111–cysteine 132, and cysteine 116–cysteine 123. Positions 93–132 (CVSTRGSCKPPAPACCHPCASCQCRFFRSACSCRVLNVNC) constitute an Agouti domain.

The protein localises to the secreted. Its function is as follows. Involved in the regulation of melanogenesis. The binding of ASP to MC1R precludes alpha-MSH initiated signaling and thus blocks production of cAMP, leading to a down-regulation of eumelanogenesis (brown/black pigment) and thus increasing synthesis of pheomelanin (yellow/red pigment). This Cebuella pygmaea (Pygmy marmoset) protein is Agouti-signaling protein (ASIP).